A 201-amino-acid polypeptide reads, in one-letter code: Dephospho-CoA kinase (201 aa).

The region spanning 7-201 (AIALSGGIGT…IETIKKDFHV (195 aa)) is the DPCK domain. Position 15–20 (15–20 (GTGKST)) interacts with ATP.

Belongs to the CoaE family.

The protein resides in the cytoplasm. The enzyme catalyses 3'-dephospho-CoA + ATP = ADP + CoA + H(+). It functions in the pathway cofactor biosynthesis; coenzyme A biosynthesis; CoA from (R)-pantothenate: step 5/5. In terms of biological role, catalyzes the phosphorylation of the 3'-hydroxyl group of dephosphocoenzyme A to form coenzyme A. The chain is Dephospho-CoA kinase from Wolinella succinogenes (strain ATCC 29543 / DSM 1740 / CCUG 13145 / JCM 31913 / LMG 7466 / NCTC 11488 / FDC 602W) (Vibrio succinogenes).